The following is a 147-amino-acid chain: Ponticulin-like protein C2 (147 aa).

Positions 1–20 are cleaved as a signal peptide; it reads MKFTKPLLLLIVAIIASSNA. Asparagine 118 is lipidated: GPI-like-anchor amidated asparagine. A glycan (N-linked (GlcNAc...) asparagine) is linked at asparagine 118. The propeptide at 119 to 147 is removed in mature form; that stretch reads SSESDSSDSTRIGASFALFALALLSMLAL.

It belongs to the ponticulin family. The GPI-like-anchor contains a phosphoceramide group, rather than a phosphatidyl group.

The protein resides in the cell membrane. This is Ponticulin-like protein C2 (ponC2) from Dictyostelium discoideum (Social amoeba).